The primary structure comprises 489 residues: ATP synthase subunit beta, chloroplastic (489 aa).

ATP is bound at residue 170-177 (GGAGVGKT).

This sequence belongs to the ATPase alpha/beta chains family. As to quaternary structure, F-type ATPases have 2 components, CF(1) - the catalytic core - and CF(0) - the membrane proton channel. CF(1) has five subunits: alpha(3), beta(3), gamma(1), delta(1), epsilon(1). CF(0) has four main subunits: a(1), b(1), b'(1) and c(9-12).

It is found in the plastid. The protein localises to the chloroplast thylakoid membrane. The enzyme catalyses ATP + H2O + 4 H(+)(in) = ADP + phosphate + 5 H(+)(out). Produces ATP from ADP in the presence of a proton gradient across the membrane. The catalytic sites are hosted primarily by the beta subunits. The chain is ATP synthase subunit beta, chloroplastic from Zygnema circumcarinatum (Green alga).